Reading from the N-terminus, the 88-residue chain is MTDKKLVKELAIEFGGSEKNVGAIEVQIAILTHDIERLKIHFETNKKDKHSKRGFIAKINKRKKLLAYLKDVNFESYQTTIQKLKIRK.

The protein belongs to the universal ribosomal protein uS15 family. In terms of assembly, part of the 30S ribosomal subunit. Forms a bridge to the 50S subunit in the 70S ribosome, contacting the 23S rRNA.

Its function is as follows. One of the primary rRNA binding proteins, it binds directly to 16S rRNA where it helps nucleate assembly of the platform of the 30S subunit by binding and bridging several RNA helices of the 16S rRNA. Forms an intersubunit bridge (bridge B4) with the 23S rRNA of the 50S subunit in the ribosome. The sequence is that of Small ribosomal subunit protein uS15 from Mycoplasmopsis pulmonis (strain UAB CTIP) (Mycoplasma pulmonis).